The sequence spans 145 residues: Cell division protein SepF (145 aa).

The tract at residues 21 to 41 (DKPQESTKAKEENVKPKHETP) is disordered. Positions 23–41 (PQESTKAKEENVKPKHETP) are enriched in basic and acidic residues.

The protein belongs to the SepF family. Homodimer. Interacts with FtsZ.

The protein resides in the cytoplasm. Cell division protein that is part of the divisome complex and is recruited early to the Z-ring. Probably stimulates Z-ring formation, perhaps through the cross-linking of FtsZ protofilaments. Its function overlaps with FtsA. This is Cell division protein SepF from Caldicellulosiruptor saccharolyticus (strain ATCC 43494 / DSM 8903 / Tp8T 6331).